The sequence spans 212 residues: MEQQEEVPPPPAGLGLTAEEYAQVRATVEAHHRYAVGPGQCSSLLAQRIHAPPAAVWAVVRRFDCPQVYKHFIRSCVLRPDPHHDDNGNDLRPGRLREVSVISGLPASTSTERLDLLDDAHRVFGFTITGGEHRLRNYRSVTTVSQLDEICTLVLESYIVDVPDGNTEDDTRLFADTVIRLNLQKLKSVSEANANAAAAAAAPPPPPPAAAE.

Residues 34–191 (YAVGPGQCSS…NLQKLKSVSE (158 aa)) form an START-like region. Abscisate-binding positions include Lys-70, 107-112 (ASTSTE), 134-140 (RLRNYRS), and Glu-156. The Gate loop motif lies at 103–107 (SGLPA). Residues 133-135 (HRL) carry the Latch loop motif.

The protein belongs to the PYR/PYL/RCAR abscisic acid intracellular receptor family. As to quaternary structure, homodimer. Interacts with PP2C53. Binding to PP2C53 is dependent on the presence of abscisic acid (ABA). Interacts with PP2C50. Binding to PP2C50 is dependent on the presence of ABA.

It localises to the cytoplasm. The protein resides in the cytosol. Its subcellular location is the nucleus. Its function is as follows. Inhibits the protein phosphatases PP2C06 and PP2C09 when activated by abscisic acid (ABA). Together with PP2C53, SAPK8 and SAPK10, may form an ABA signaling module involved in stress response. The chain is Abscisic acid receptor PYL10 from Oryza sativa subsp. japonica (Rice).